A 117-amino-acid chain; its full sequence is Large ribosomal subunit protein bL19 (117 aa).

It belongs to the bacterial ribosomal protein bL19 family.

In terms of biological role, this protein is located at the 30S-50S ribosomal subunit interface and may play a role in the structure and function of the aminoacyl-tRNA binding site. The chain is Large ribosomal subunit protein bL19 from Alkaliphilus metalliredigens (strain QYMF).